Reading from the N-terminus, the 408-residue chain is 3-ketoacyl-CoA thiolase B, peroxisomal (408 aa).

The active-site Acyl-thioester intermediate is the C112. Residues H366 and C394 each act as proton acceptor in the active site.

Belongs to the thiolase-like superfamily. Thiolase family. Homodimer.

Its subcellular location is the peroxisome. It carries out the reaction an acyl-CoA + acetyl-CoA = a 3-oxoacyl-CoA + CoA. It functions in the pathway lipid metabolism; fatty acid metabolism. In Candida tropicalis (Yeast), this protein is 3-ketoacyl-CoA thiolase B, peroxisomal.